The chain runs to 179 residues: Replication restart protein DnaT (179 aa).

A disordered region spans residues 154 to 179 (SNGGLPKRDVNTVSEPDSQIPPGFRG).

The protein belongs to the DnaT family. In terms of assembly, homooligomerizes. Interacts with PriB. Component of the replication restart primosome. Primosome assembly occurs via a 'hand-off' mechanism. PriA binds to replication forks, subsequently PriB then DnaT bind; DnaT then displaces ssDNA to generate the helicase loading substrate.

Its function is as follows. Involved in the restart of stalled replication forks, which reloads the replicative helicase on sites other than the origin of replication. Can function in multiple replication restart pathways. Displaces ssDNA from a PriB-ssDNA complex. Probably forms a spiral filament on ssDNA. The sequence is that of Replication restart protein DnaT from Escherichia coli O127:H6 (strain E2348/69 / EPEC).